The primary structure comprises 93 residues: UPF0521 protein A (93 aa).

Residues serine 2–threonine 58 adopt a coiled-coil conformation.

This sequence belongs to the UPF0521 family.

This Dictyostelium discoideum (Social amoeba) protein is UPF0521 protein A.